Consider the following 338-residue polypeptide: tRNA-specific 2-thiouridylase MnmA (338 aa).

ATP is bound by residues 6 to 13 (ALSGGVDS) and M32. C92 serves as the catalytic Nucleophile. Cysteines 92 and 186 form a disulfide. Residue G116 participates in ATP binding. Positions 134–136 (KDQ) are interaction with tRNA. C186 serves as the catalytic Cysteine persulfide intermediate. Residues 288 to 289 (RY) are interaction with tRNA.

It belongs to the MnmA/TRMU family.

It localises to the cytoplasm. It catalyses the reaction S-sulfanyl-L-cysteinyl-[protein] + uridine(34) in tRNA + AH2 + ATP = 2-thiouridine(34) in tRNA + L-cysteinyl-[protein] + A + AMP + diphosphate + H(+). Catalyzes the 2-thiolation of uridine at the wobble position (U34) of tRNA, leading to the formation of s(2)U34. The chain is tRNA-specific 2-thiouridylase MnmA from Campylobacter fetus subsp. fetus (strain 82-40).